A 655-amino-acid chain; its full sequence is Hepatocyte growth factor activator serine protease (655 aa).

Positions 1–35 (MGRWAWVPSPWPPPGLGPFLLLLLLLLLLPRGFQP) are cleaved as a signal peptide. A propeptide spans 36–372 (QPGGNRTESP…RLEACESLTR (337 aa)) (removed in mature form). N-linked (GlcNAc...) asparagine glycans are attached at residues Asn40 and Asn48. The tract at residues 64-102 (TSETPATSAPEAEGPQSGGLPPPPRAVPSSSSPQAQALT) is disordered. The region spanning 103–150 (EDGRPCRFPFRYGGRMLHACTSEGSAHRKWCATTHNYDRDRAWGYCVE) is the Fibronectin type-II domain. Cystine bridges form between Cys108/Cys133, Cys122/Cys148, Cys164/Cys175, Cys169/Cys186, Cys188/Cys197, Cys202/Cys230, Cys228/Cys237, Cys245/Cys256, Cys250/Cys267, Cys269/Cys278, Cys286/Cys367, Cys307/Cys349, Cys338/Cys362, Cys394/Cys521, Cys432/Cys448, Cys440/Cys510, Cys535/Cys604, Cys567/Cys583, and Cys594/Cys622. An EGF-like 1 domain is found at 160-198 (ALDPCASGPCLNGGSCSNTQDPQSYHCSCPRAFTGKDCG). One can recognise a Fibronectin type-I domain in the interval 200–240 (EKCFDETRYEYLEGGDRWARVRQGHVEQCECFGGRTWCEGT). The region spanning 241-279 (RHTACLSSPCLNGGTCHLIVATGTTVCACPPGFAGRLCN) is the EGF-like 2 domain. Positions 286–367 (CFLGNGTGYR…SWEYCRLEAC (82 aa)) constitute a Kringle domain. The N-linked (GlcNAc...) asparagine glycan is linked to Asn290. In terms of domain architecture, Peptidase S1 spans 408-646 (IIGGSSSLPG…YVDWINDRIR (239 aa)). Residue His447 is the Charge relay system of the active site. N-linked (GlcNAc...) asparagine glycans are attached at residues Asn468 and Asn492. The active-site Charge relay system is the Asp497. N-linked (GlcNAc...) asparagine glycosylation is present at Asn546. The active-site Charge relay system is Ser598.

Belongs to the peptidase S1 family. In terms of assembly, heterodimer of a short chain and a long chain linked by a disulfide bond. The active form of HGFAC presents in the serum is derived from the COOH-terminal region of the precursor by the cleavage of bonds between Arg-372 and Val-373 and Arg-407 and Ile-408. As to expression, liver.

It localises to the secreted. Functionally, serine protease that hydrolyzes the inactive zymogen hepatocyte growth factor (HGFsc) to an activated disulfide-linked heterodimer, then initiating hepatocyte growth factor receptor signaling pathway. The polypeptide is Hepatocyte growth factor activator serine protease (Homo sapiens (Human)).